A 473-amino-acid chain; its full sequence is H(+)/Cl(-) exchange transporter ClcA (473 aa).

Topologically, residues 1–32 (MKTDTPSLETPQAARLRRRQLIRQLLERDKTP) are cytoplasmic. The helical transmembrane segment at 33–69 (LAILFMAAVVGTLVGLAAVAFDKGVAWLQNQRMGALV) threads the bilayer. Topologically, residues 70 to 76 (HTADNYP) are periplasmic. A helical transmembrane segment spans residues 77–100 (LLLTVAFLCSAVLAMFGYFLVRKY). The Selectivity filter part_1 motif lies at 106-110 (GSGIP). Serine 107 is a chloride binding site. An intramembrane region (helical) is located at residues 109–116 (IPEIEGAL). At 117 to 123 (EDQRPVR) the chain is on the cytoplasmic side. Helical transmembrane passes span 124 to 141 (WWRV…TLGG) and 148 to 166 (EGPT…LDVF). The short motif at 146–150 (GREGP) is the Selectivity filter part_2 element. The Cytoplasmic segment spans residues 167–176 (RLKGDEARHT). Intramembrane regions (helical) lie at residues 177 to 189 (LLAT…LAAA) and 193 to 201 (PLAGILFII). Residues 202 to 214 (EEMRPQFRYTLIS) are Cytoplasmic-facing. Residues 215-232 (IKAVFIGVIMSTIMYRIF) form a helical membrane-spanning segment. At 233 to 252 (NHEVALIDVGKLSDAPLNTL) the chain is on the periplasmic side. A helical transmembrane segment spans residues 253-281 (WLYLILGIIFGIFGPIFNKWVLGMQDLLH). Residues 282 to 287 (RVHGGN) lie on the Cytoplasmic side of the membrane. Residues 288-309 (ITKWVLMGGAIGGLCGLLGFVA) traverse the membrane as a helical segment. The Periplasmic segment spans residues 310 to 329 (PATSGGGFNLIPIATAGNFS). 2 consecutive transmembrane segments (helical) span residues 330 to 349 (MGML…LCFS) and 355 to 376 (GIFA…MVAV). Residues 355–359 (GIFAP) carry the Selectivity filter part_3 motif. Chloride contacts are provided by isoleucine 356 and phenylalanine 357. At 377–386 (ELFPQYHLEA) the chain is on the periplasmic side. Residues 387–401 (GTFAIAGMGALLAAS) constitute an intramembrane region (helical). Residues 402–404 (IRA) constitute an intramembrane region (note=Loop between two helices). The segment at residues 405-416 (PLTGIILVLEMT) is an intramembrane region (helical). The note=Loop between two helices intramembrane region spans 417-421 (DNYQL). The helical transmembrane segment at 422–438 (ILPMIITGLGATLLAQF) threads the bilayer. The Cytoplasmic segment spans residues 439-473 (TGGKPLYSAILARTLAKQEAEQLARSKAASARENT). A chloride-binding site is contributed by tyrosine 445.

It belongs to the chloride channel (TC 2.A.49) family. ClcA subfamily. In terms of assembly, homodimer.

The protein resides in the cell inner membrane. It catalyses the reaction 2 chloride(in) + H(+)(out) = 2 chloride(out) + H(+)(in). In terms of biological role, proton-coupled chloride transporter. Functions as antiport system and exchanges two chloride ions for 1 proton. Probably acts as an electrical shunt for an outwardly-directed proton pump that is linked to amino acid decarboxylation, as part of the extreme acid resistance (XAR) response. The sequence is that of H(+)/Cl(-) exchange transporter ClcA from Escherichia coli O45:K1 (strain S88 / ExPEC).